The following is a 260-amino-acid chain: 3-alpha-(or 20-beta)-hydroxysteroid dehydrogenase (260 aa).

Residues Arg-17, Met-19, Asp-38, Asp-61, Val-62, Asn-88, Tyr-153, Lys-157, Val-186, Thr-188, and Thr-191 each contribute to the NAD(+) site. Residue Tyr-153 is the Proton acceptor of the active site.

It belongs to the short-chain dehydrogenases/reductases (SDR) family. Homotetramer.

It carries out the reaction androstan-3alpha,17beta-diol + NAD(+) = 17beta-hydroxyandrostanone + NADH + H(+). Its pathway is lipid metabolism; steroid degradation. Functionally, probably involved in steroid metabolism. This Mycobacterium bovis (strain ATCC BAA-935 / AF2122/97) protein is 3-alpha-(or 20-beta)-hydroxysteroid dehydrogenase (fabG3).